Here is a 156-residue protein sequence, read N- to C-terminus: Iron sulfur cluster assembly protein 2, mitochondrial (156 aa).

The N-terminal 26 residues, Met1–Leu26, are a transit peptide targeting the mitochondrion.

Belongs to the NifU family. As to quaternary structure, component of the core Fe-S cluster (ISC) assembly machinery. Interacts with frataxin. Interacts with the mitochondrial co-chaperones JAC1 and SSQ1. Interacts with NFS1. Interacts with ferredoxin YAH1; interacts with the reduced form. The cofactor is [2Fe-2S] cluster.

It localises to the mitochondrion matrix. It functions in the pathway cofactor biosynthesis; iron-sulfur cluster biosynthesis. In terms of biological role, scaffold protein for the de novo synthesis of iron-sulfur (Fe-S) clusters within mitochondria, which is required for maturation of both mitochondrial and cytoplasmic [2Fe-2S] and [4Fe-4S] proteins. First, a [2Fe-2S] cluster is transiently assembled on the scaffold proteins ISU1 and ISU2. In a second step, the cluster is released from ISU1/ISU2, transferred to glutaredoxin GRX5, followed by the formation of mitochondrial [2Fe-2S] proteins, the synthesis of [4Fe-4S] clusters and their target-specific insertion into the recipient apoproteins. Cluster assembly on ISU1/ISU2 depends on the function of the cysteine desulfurase complex NFS1-ISD11, which serves as the sulfur donor for cluster synthesis, the iron-binding protein frataxin (YFH1) as the putative iron donor, and the electron transfer chain comprised of ferredoxin reductase ARH1 and ferredoxin YAH1, which receive their electrons from NADH. Fe-S cluster release from ISU1/ISU2 is achieved by interaction with the Hsp70 chaperone SSQ1, assisted by the DnaJ-like co-chaperone JAC1 and the nucleotide exchange factor MGE1. ISU1 is the major isoform in yeast, while ISU2 is not detectable in cells grown to stationary phase. Also involved in production of a sulfur precursor required for thiolation of cytoplasmic tRNAs. In Saccharomyces cerevisiae (strain ATCC 204508 / S288c) (Baker's yeast), this protein is Iron sulfur cluster assembly protein 2, mitochondrial.